The following is a 655-amino-acid chain: MAPGEKIKAKIKKNLPVRGPQAPTIKDLMHWYCLNTNTHGCRRIVVSRGRLRRLLWIAFTLTAVALIIWQCALLVFSFYTVSVSIKVHFQKLDFPAVTICNINPYKYSAVSDLLTDLDSETKQALLSLYGVKDVLDSTPRKRREAGSMRSTWEGTPPRFLNLIPLLVFNENEKGKARDFFTGRKRKISGKIIHKASNVMHVHESKKLVGFQLCSNDTSDCATYTFSSGINAIQEWYKLHYMNIMAQVPLEKKINMSYSAEELLVTCFFDGMSCDARNFTLFHHPMYGNCYTFNNRENATILSTSMGGSEYGLQVILYINEDEYNPFLVSSTGAKVLVHQQNEYPFIEDVGTEIETAMSTSIGMHLTESFKLSEPYSQCTEDGSDVPVTNIYNAAYSLQICLYSCFQTKMVEKCGCAQYSQPLPPAANYCNYQQHPNWMYCYYQLYQAFVREELGCQSVCKQSCSFKEWTLTTSLAQWPSEASEKWLLNVLTWDQSQQINKKLNKTDLAKLLIFYKDLNQRSIMESPANSIEMLLSNFGGQLGLWMSCSVVCVIEIIEVFFIDFFSIIARRQWQKAKDWWARRRTPPSTETPSSQQGQDNPALDTDDDLPTFTSAMRLPPAPEAPVPGTPPPRYNTLRLDSAFSSQLTDTQLTNEF.

Over 1 to 55 (MAPGEKIKAKIKKNLPVRGPQAPTIKDLMHWYCLNTNTHGCRRIVVSRGRLRRLL) the chain is Cytoplasmic. The chain crosses the membrane as a helical span at residues 56–76 (WIAFTLTAVALIIWQCALLVF). At 77–547 (SFYTVSVSIK…GGQLGLWMSC (471 aa)) the chain is on the extracellular side. 8 disulfide bridges follow: C100/C289, C213/C220, C266/C273, C378/C463, C400/C459, C404/C455, C413/C440, and C415/C429. The tract at residues 140-227 (RKRREAGSMR…SDCATYTFSS (88 aa)) is gating release of inhibition by proteolysis (GRIP); protease-sensitive region that is responsible for the proteolytic activation of the channel. The N-linked (GlcNAc...) asparagine glycan is linked to N215. N277 carries N-linked (GlcNAc...) asparagine glycosylation. The N-linked (GlcNAc...) asparagine glycan is linked to N503. The helical transmembrane segment at 548-568 (SVVCVIEIIEVFFIDFFSIIA) threads the bilayer. The Cytoplasmic segment spans residues 569–655 (RRQWQKAKDW…LTDTQLTNEF (87 aa)). Residues 582–636 (RRTPPSTETPSSQQGQDNPALDTDDDLPTFTSAMRLPPAPEAPVPGTPPPRYNTL) form a disordered region. The segment covering 585–598 (PPSTETPSSQQGQD) has biased composition (polar residues). Positions 618–632 (PPAPEAPVPGTPPPR) are enriched in pro residues. The short motif at 629–633 (PPPRY) is the PY motif; recruits WW domain-containing proteins and is thereby required for ubiquitination and inhibition of the channel by NEDD4 and NEDD4L element.

This sequence belongs to the amiloride-sensitive sodium channel (TC 1.A.6) family. SCNN1G subfamily. As to quaternary structure, component of the heterotrimeric epithelial sodium channel (ENaC) composed of an alpha/SCNN1A, a beta/SCNN1B and a gamma/SCNN1G subunit. Interacts with WWP1 (via WW domains). Interacts with WWP2 (via WW domains); inhibits the channel. Interacts with the full-length immature form of PCSK9 (pro-PCSK9); inhibits ENaC by promoting its proteasomal degradation. Interacts with BPIFA1; the interaction is indirect via SCNN1B and inhibits the proteolytic maturation of SCNN1A and SCNN1G and the activation of ENaC. Post-translationally, phosphorylated on serine and threonine residues. Aldosterone and insulin increase the basal level of phosphorylation. Ubiquitinated. Can be ubiquitinated at multiple sites and undergo monoubiquitination and polyubiquitination. Ubiquitination by NEDD4 or NEDD4L inhibits the ENaC channel through endocytosis, intracellular retention and degradation of its individual subunits. In terms of processing, ENaC is activated through the proteolytic maturation of its subunits. Furin cleaves the SCNN1G subunit first, followed by cleavage by prostasin (PRSS8), which results in a stepwise increase in the open probability of the channel due to the release of an inhibitory tract. BPIFA1, which is recruited by the SCNN1B subunit, prevents the proteolytic activation of ENaC. Post-translationally, N-glycosylated. N-linked glycans are processed to complex type during ENaC complex assembly and transport to the plasma membrane. In terms of tissue distribution, lung and kidney.

The protein localises to the apical cell membrane. The catalysed reaction is Na(+)(in) = Na(+)(out). Originally identified and characterized by its inhibition by the diuretic drug amiloride. Functionally, this is one of the three pore-forming subunits of the heterotrimeric epithelial sodium channel (ENaC), a critical regulator of sodium balance and fluid homeostasis. ENaC operates in epithelial tissues, where it mediates the electrodiffusion of sodium ions from extracellular fluid through the apical membrane of cells, with water following osmotically. It plays a key role in maintaining sodium homeostasis through electrogenic sodium reabsorption in the kidneys. Additionally, ENaC is essential for airway surface liquid homeostasis, which is crucial for proper mucus clearance. The sequence is that of Epithelial sodium channel subunit gamma from Mus musculus (Mouse).